Consider the following 295-residue polypeptide: Bifunctional protein FolD (295 aa).

NADP(+) contacts are provided by residues 163–165 (GRS), S188, and I229.

Belongs to the tetrahydrofolate dehydrogenase/cyclohydrolase family. In terms of assembly, homodimer.

The catalysed reaction is (6R)-5,10-methylene-5,6,7,8-tetrahydrofolate + NADP(+) = (6R)-5,10-methenyltetrahydrofolate + NADPH. It catalyses the reaction (6R)-5,10-methenyltetrahydrofolate + H2O = (6R)-10-formyltetrahydrofolate + H(+). It participates in one-carbon metabolism; tetrahydrofolate interconversion. Its function is as follows. Catalyzes the oxidation of 5,10-methylenetetrahydrofolate to 5,10-methenyltetrahydrofolate and then the hydrolysis of 5,10-methenyltetrahydrofolate to 10-formyltetrahydrofolate. This Hyphomonas neptunium (strain ATCC 15444) protein is Bifunctional protein FolD.